An 871-amino-acid polypeptide reads, in one-letter code: Chaperone protein ClpB 1 (871 aa).

The region spanning 6-147 is the Clp R domain; sequence PNQFTEKAWA…REAIQQIRGS (142 aa). 2 repeat regions span residues 9–73 and 84–147; these read FTEK…ISRQ and LGQS…IRGS. Residues 160–341 are NBD1; the sequence is AALEKYGRDL…RRFQQVYVDQ (182 aa). 207–214 contributes to the ATP binding site; the sequence is GEPGVGKT. The tract at residues 342–550 is linker; sequence PSVEDTISIL…IAEIISKWTG (209 aa). Residues 392-526 adopt a coiled-coil conformation; the sequence is IDLVDEAAAK…AEAKLREIQV (135 aa). Residues 560-771 are NBD2; that stretch reads EAQKLLHLEE…RVDEFIIFHS (212 aa). 610 to 617 is a binding site for ATP; it reads GPTGVGKT. Residues 772–871 form a C-terminal region; sequence LRKDQLRQIV…FRRQVELATV (100 aa).

It belongs to the ClpA/ClpB family. In terms of assembly, homohexamer. The oligomerization is ATP-dependent.

It is found in the cytoplasm. Its function is as follows. Part of a stress-induced multi-chaperone system, it is involved in the recovery of the cell from heat-induced damage, in cooperation with DnaK, DnaJ and GrpE. Acts before DnaK, in the processing of protein aggregates. Protein binding stimulates the ATPase activity; ATP hydrolysis unfolds the denatured protein aggregates, which probably helps expose new hydrophobic binding sites on the surface of ClpB-bound aggregates, contributing to the solubilization and refolding of denatured protein aggregates by DnaK. The protein is Chaperone protein ClpB 1 (clpB1) of Thermosynechococcus vestitus (strain NIES-2133 / IAM M-273 / BP-1).